The primary structure comprises 210 residues: Syntaxin-binding protein 6 (210 aa).

Residue serine 2 is modified to N-acetylserine. The 60-residue stretch at 151–210 folds into the v-SNARE coiled-coil homology domain; it reads GNSILHSAADSVTSAVQKASQALNERGERLGRAEEKTEDLKNSAQQFAETAHKLAMKHKC.

As to quaternary structure, part of a ternary complex containing SNAP25 and STX1A that can be dissociated by NAPA and NSF. Interacts with STX4A. In terms of tissue distribution, detected at low levels in brain, and at very low levels in heart, adrenal gland, testis, liver and kidney.

The protein localises to the cytoplasm. It is found in the membrane. In terms of biological role, forms non-fusogenic complexes with SNAP25 and STX1A and may thereby modulate the formation of functional SNARE complexes and exocytosis. This is Syntaxin-binding protein 6 (STXBP6) from Homo sapiens (Human).